The chain runs to 810 residues: Plasminogen (810 aa).

Residues 1–19 (MQRKELVLLFLLFLQPGHG) form the signal peptide. Residues 20-98 (IPLDDYVTTQ…RDVILFEKKM (79 aa)) form the PAN domain. Disulfide bonds link cysteine 49/cysteine 73, cysteine 53/cysteine 61, cysteine 103/cysteine 181, cysteine 124/cysteine 164, cysteine 152/cysteine 176, cysteine 185/cysteine 262, cysteine 188/cysteine 316, cysteine 206/cysteine 245, cysteine 234/cysteine 257, cysteine 275/cysteine 352, cysteine 296/cysteine 335, cysteine 324/cysteine 347, cysteine 379/cysteine 456, cysteine 400/cysteine 439, cysteine 428/cysteine 451, cysteine 482/cysteine 561, cysteine 503/cysteine 544, cysteine 532/cysteine 556, cysteine 569/cysteine 685, cysteine 579/cysteine 586, cysteine 607/cysteine 623, cysteine 699/cysteine 766, cysteine 729/cysteine 745, and cysteine 756/cysteine 784. Kringle domains lie at 103–181 (CKVG…IIQC), 185–262 (CMHC…IPRC), 275–352 (CLMG…IPDC), 379–456 (CYQG…LKKC), and 482–561 (CIID…IPHC). Residue asparagine 339 is glycosylated (N-linked (GlcNAc...) asparagine). Residues 398–418 (KKCQPWTSMRPHRHSKTPENY) are disordered. Residues 582–808 (RVGGCVAHPH…YVSWLQDVMR (227 aa)) form the Peptidase S1 domain. Serine 598 carries the phosphoserine modification. Catalysis depends on charge relay system residues histidine 622 and aspartate 665. Serine 760 functions as the Charge relay system in the catalytic mechanism.

It belongs to the peptidase S1 family. Plasminogen subfamily. Interacts with CSPG4 and AMOT. Interacts (via the Kringle domains) with HRG; the interaction tethers PLG to the cell surface and enhances its activation. Interacts (via Kringle 4 domain) with ADA; the interaction stimulates PLG activation when in complex with DPP4. Angiostatin: Interacts with ATP5F1A; the interaction inhibits most of the angiogenic effects of angiostatin. Post-translationally, in the presence of the inhibitor, the activation involves only cleavage after Arg-582, yielding two chains held together by two disulfide bonds. In the absence of the inhibitor, the activation involves additionally the removal of the activation peptide.

It localises to the secreted. The catalysed reaction is Preferential cleavage: Lys-|-Xaa &gt; Arg-|-Xaa, higher selectivity than trypsin. Converts fibrin into soluble products.. With respect to regulation, converted into plasmin by plasminogen activators, both plasminogen and its activator being bound to fibrin. Cannot be activated with streptokinase. In terms of biological role, plasmin dissolves the fibrin of blood clots and acts as a proteolytic factor in a variety of other processes including embryonic development, tissue remodeling, tumor invasion, and inflammation. In ovulation, weakens the walls of the Graafian follicle. It activates the urokinase-type plasminogen activator, collagenases and several complement zymogens, such as C1, C4 and C5. Cleavage of fibronectin and laminin leads to cell detachment and apoptosis. Also cleaves fibrin, thrombospondin and von Willebrand factor. Its role in tissue remodeling and tumor invasion may be modulated by CSPG4. Binds to cells. The sequence is that of Plasminogen (PLG) from Erinaceus europaeus (Western European hedgehog).